A 321-amino-acid polypeptide reads, in one-letter code: Ferredoxin--NADP reductase (321 aa).

7 residues coordinate FAD: Glu-33, Gln-41, Tyr-46, Val-86, Leu-119, Asp-277, and Ser-318.

The protein belongs to the ferredoxin--NADP reductase type 2 family. As to quaternary structure, homodimer. Requires FAD as cofactor.

It catalyses the reaction 2 reduced [2Fe-2S]-[ferredoxin] + NADP(+) + H(+) = 2 oxidized [2Fe-2S]-[ferredoxin] + NADPH. The sequence is that of Ferredoxin--NADP reductase from Lactococcus lactis subsp. lactis (strain IL1403) (Streptococcus lactis).